The primary structure comprises 449 residues: Phosphoglucosamine mutase (449 aa).

Serine 101 functions as the Phosphoserine intermediate in the catalytic mechanism. Positions 101, 240, 242, and 244 each coordinate Mg(2+). At serine 101 the chain carries Phosphoserine.

It belongs to the phosphohexose mutase family. Mg(2+) serves as cofactor. Activated by phosphorylation.

It carries out the reaction alpha-D-glucosamine 1-phosphate = D-glucosamine 6-phosphate. In terms of biological role, catalyzes the conversion of glucosamine-6-phosphate to glucosamine-1-phosphate. The protein is Phosphoglucosamine mutase of Streptococcus suis (strain 98HAH33).